The primary structure comprises 213 residues: Large ribosomal subunit protein uL1 (213 aa).

It belongs to the universal ribosomal protein uL1 family. Part of the 50S ribosomal subunit.

Functionally, binds directly to 23S rRNA. Probably involved in E site tRNA release. Protein L1 is also a translational repressor protein, it controls the translation of its operon by binding to its mRNA. This is Large ribosomal subunit protein uL1 from Methanococcoides burtonii (strain DSM 6242 / NBRC 107633 / OCM 468 / ACE-M).